We begin with the raw amino-acid sequence, 420 residues long: Dynein axonemal assembly factor 4 (420 aa).

In terms of domain architecture, CS spans 3-87 (LQVSDYSWQQ…KEAAMWETLS (85 aa)). A mediates interaction with ESR1 and STUB1 region spans residues 7 to 103 (DYSWQQTKTA…EMMQRIREKS (97 aa)). TPR repeat units lie at residues 290–323 (PEWLKDKGNKLFATENYLAAINAYNLAIRLNNKM), 324–357 (PLLYLNRAACHLKLKNLHKAIEDSSKALELLMPP), and 366–399 (MKAHVRRGTAFCQLELYVEGLQDYEAALKIDPSN).

In terms of assembly, interacts with ZMYND10. Interacts with STUB1. Interacts with ESR1 and ESR2. Interacts with DNAAF2. Interacts with CCT3, CCT4, CCT5 and CCT8. Interacts with DNAAF6/PIH1D3.

Its subcellular location is the nucleus. It localises to the cytoplasm. The protein resides in the cell projection. The protein localises to the neuron projection. It is found in the dynein axonemal particle. In terms of biological role, involved in neuronal migration during development of the cerebral neocortex. May regulate the stability and proteasomal degradation of the estrogen receptors that play an important role in neuronal differentiation, survival and plasticity. Axonemal dynein assembly factor required for ciliary motility. The polypeptide is Dynein axonemal assembly factor 4 (Pan troglodytes (Chimpanzee)).